The following is a 1744-amino-acid chain: Tanabin (1744 aa).

Residues methionine 1–glutamate 12 are head. The segment at valine 8–leucine 48 is coil 1A. The 308-residue stretch at glutamate 13–isoleucine 320 folds into the IF rod domain. The segment at arginine 49–lysine 60 is linker 1. The tract at residues histidine 61–methionine 156 is coil 1B. The tract at residues glutamate 157–proline 179 is linker 12. A coil 2A region spans residues valine 180 to tryptophan 193. Positions glutamine 194–glutamate 199 are linker 2. Residues tyrosine 200–glutamate 314 are coil 2B. The tract at residues alanine 315–phenylalanine 1744 is tail. Composition is skewed to basic and acidic residues over residues arginine 341 to leucine 371 and histidine 785 to serine 815. Disordered stretches follow at residues arginine 341–glutamine 372, histidine 785–glutamate 816, glutamate 976–glutamate 996, serine 1032–aspartate 1093, aspartate 1340–valine 1470, serine 1485–asparagine 1506, and alanine 1560–histidine 1722. Residues leucine 980–glycine 990 show a composition bias toward polar residues. A compositionally biased stretch (acidic residues) spans glutamate 1034–glutamine 1056. Residues valine 1074–glutamate 1086 show a composition bias toward basic and acidic residues. The segment covering aspartate 1340–glutamine 1351 has biased composition (acidic residues). Residues glutamate 1352–asparagine 1367 are compositionally biased toward basic and acidic residues. Residues glutamate 1368–aspartate 1377 are compositionally biased toward acidic residues. Positions histidine 1386–glutamine 1398 are enriched in basic and acidic residues. A compositionally biased stretch (acidic residues) spans leucine 1412–glutamate 1421. The segment covering proline 1423–asparagine 1432 has biased composition (basic and acidic residues). Polar residues predominate over residues aspartate 1433–threonine 1442. Basic and acidic residues predominate over residues aspartate 1445–glutamate 1460. The segment covering aspartate 1496–glutamate 1505 has biased composition (acidic residues). 3 stretches are compositionally biased toward polar residues: residues glutamate 1576–proline 1586, glutamate 1597–serine 1621, and serine 1629–threonine 1639. Residues arginine 1680 to serine 1691 are compositionally biased toward acidic residues. Basic and acidic residues predominate over residues asparagine 1698 to valine 1709.

This sequence belongs to the intermediate filament family. As to expression, growth cones of embryonic vertebrate neurons.

The polypeptide is Tanabin (Xenopus laevis (African clawed frog)).